A 133-amino-acid polypeptide reads, in one-letter code: Large ribosomal subunit protein uL14 (133 aa).

This sequence belongs to the universal ribosomal protein uL14 family. As to quaternary structure, part of the 50S ribosomal subunit. Forms a cluster with proteins L3 and L24e, part of which may contact the 16S rRNA in 2 intersubunit bridges.

In terms of biological role, binds to 23S rRNA. Forms part of two intersubunit bridges in the 70S ribosome. This is Large ribosomal subunit protein uL14 from Nanoarchaeum equitans (strain Kin4-M).